A 693-amino-acid polypeptide reads, in one-letter code: Elongation factor G (693 aa).

In terms of domain architecture, tr-type G spans 8 to 282; sequence EKTRNIGIMA…AVIDYLPSPL (275 aa). GTP is bound by residues 17–24, 81–85, and 135–138; these read AHVDAGKT, DTPGH, and NKMD.

It belongs to the TRAFAC class translation factor GTPase superfamily. Classic translation factor GTPase family. EF-G/EF-2 subfamily.

It is found in the cytoplasm. In terms of biological role, catalyzes the GTP-dependent ribosomal translocation step during translation elongation. During this step, the ribosome changes from the pre-translocational (PRE) to the post-translocational (POST) state as the newly formed A-site-bound peptidyl-tRNA and P-site-bound deacylated tRNA move to the P and E sites, respectively. Catalyzes the coordinated movement of the two tRNA molecules, the mRNA and conformational changes in the ribosome. The polypeptide is Elongation factor G (Streptococcus pneumoniae serotype 2 (strain D39 / NCTC 7466)).